The primary structure comprises 256 residues: tRNA pseudouridine synthase A (256 aa).

D49 functions as the Nucleophile in the catalytic mechanism. Y104 contributes to the substrate binding site.

The protein belongs to the tRNA pseudouridine synthase TruA family.

The enzyme catalyses uridine(38/39/40) in tRNA = pseudouridine(38/39/40) in tRNA. Functionally, formation of pseudouridine at positions 38, 39 and 40 in the anticodon stem and loop of transfer RNAs. This chain is tRNA pseudouridine synthase A, found in Methanopyrus kandleri (strain AV19 / DSM 6324 / JCM 9639 / NBRC 100938).